The chain runs to 412 residues: Pentatricopeptide repeat-containing protein At3g60980, mitochondrial (412 aa).

A mitochondrion-targeting transit peptide spans 1-18 (MSLIGRLNLGRRFCTAVP). 9 PPR repeats span residues 69-104 (TTTI…NLRP), 105-139 (NSHC…GQVH), 143-178 (SDDS…TTYP), 179-213 (DHVA…FLIA), 230-264 (VAFL…NRLL), 266-296 (CAET…LLDK), 305-339 (DSDT…NDYL), 344-371 (IITR…DFGY), and 373-407 (DVNT…TLKE).

It belongs to the PPR family. P subfamily.

It localises to the mitochondrion. The polypeptide is Pentatricopeptide repeat-containing protein At3g60980, mitochondrial (Arabidopsis thaliana (Mouse-ear cress)).